Consider the following 543-residue polypeptide: Reticulophagy regulator 2 (543 aa).

A run of 3 helical transmembrane segments spans residues 12–32, 100–120, and 204–224; these read AGGGPGMGLSLGLGLGLSLGM, SLRPFFLLSVSLLAYFLLDLW, and VPGIMISYIVLLSILLWPLVV. Over residues 254 to 265 the composition is skewed to basic residues; it reads LHHKHDKRKRQG. The disordered stretch occupies residues 254-287; that stretch reads LHHKHDKRKRQGKNAPPGGDEPLAETESESEAEL. Residues 275-285 show a composition bias toward acidic residues; that stretch reads PLAETESESEA. Residue Thr279 is modified to Phosphothreonine. Ser281, Ser283, Ser291, and Ser311 each carry phosphoserine. At Thr334 the chain carries Phosphothreonine. 2 disordered regions span residues 336-394 and 411-486; these read VSED…DVAA and HFNG…EEEA. Phosphoserine occurs at positions 337, 344, 347, and 385. Pro residues predominate over residues 461-480; that stretch reads APSPSILPPVPQDSPQPLPA. Positions 490–495 match the LIR motif motif; the sequence is EDFELL. The interval 504–543 is disordered; sequence NAELGLEPETPPKPPDAPPLGPDIHSLVQSDQEAQAVAEP. Residues 512–524 show a composition bias toward pro residues; sequence ETPPKPPDAPPLG.

It belongs to the RETREG family. In terms of assembly, interacts with ATG8 family modifier proteins MAP1LC3A, MAP1LC3B, MAP1LC3C, GABARAP, GABARAPL1 and GABARAPL2. Shows higher affinity for GABARAPL1 than for MAP1LC3B. Interacts with CANX.

The protein localises to the endoplasmic reticulum membrane. In terms of biological role, endoplasmic reticulum (ER)-anchored autophagy regulator which exists in an inactive state under basal conditions but is activated following cellular stress. When activated, induces ER fragmentation and mediates ER delivery into lysosomes through sequestration into autophagosomes via interaction with ATG8 family proteins. Required for collagen quality control in a LIR motif-independent manner. This chain is Reticulophagy regulator 2, found in Homo sapiens (Human).